A 108-amino-acid chain; its full sequence is UPF0060 membrane protein Mvan_3406 (108 aa).

The next 4 membrane-spanning stretches (helical) occupy residues 7-27 (LLFV…WQGV), 32-52 (GLTW…VAAF), 61-81 (VLAA…VVAD), and 87-107 (RWDI…MYAP).

The protein belongs to the UPF0060 family.

The protein resides in the cell membrane. In Mycolicibacterium vanbaalenii (strain DSM 7251 / JCM 13017 / BCRC 16820 / KCTC 9966 / NRRL B-24157 / PYR-1) (Mycobacterium vanbaalenii), this protein is UPF0060 membrane protein Mvan_3406.